The following is a 323-amino-acid chain: Cobalamin biosynthesis protein CobD (323 aa).

Helical transmembrane passes span 52-72 (IAGV…TWLM), 73-93 (VWGS…LLSS), 154-174 (DGII…GMAF), 214-234 (ALLM…AASI), and 294-314 (IRLM…TAAL).

This sequence belongs to the CobD/CbiB family.

The protein resides in the cell membrane. Its pathway is cofactor biosynthesis; adenosylcobalamin biosynthesis. Its function is as follows. Converts cobyric acid to cobinamide by the addition of aminopropanol on the F carboxylic group. The protein is Cobalamin biosynthesis protein CobD of Pelobacter propionicus (strain DSM 2379 / NBRC 103807 / OttBd1).